Reading from the N-terminus, the 294-residue chain is DNA replication complex GINS protein SLD5 (294 aa).

This sequence belongs to the GINS4/SLD5 family. In terms of assembly, component of the GINS complex which is a heterotetramer composed of SLD5, PSF1, PSF2 and PSF3. Interacts with PSF2.

It localises to the nucleus. In terms of biological role, required for DNA replication. Functions as part of the GINS complex which plays an essential role in the initiation of DNA replication by binding to DNA replication origins and facilitating the assembly of the DNA replication machinery. The polypeptide is DNA replication complex GINS protein SLD5 (Saccharomyces cerevisiae (strain ATCC 204508 / S288c) (Baker's yeast)).